We begin with the raw amino-acid sequence, 255 residues long: Pyrroloquinoline-quinone synthase (255 aa).

Belongs to the PqqC family.

The enzyme catalyses 6-(2-amino-2-carboxyethyl)-7,8-dioxo-1,2,3,4,7,8-hexahydroquinoline-2,4-dicarboxylate + 3 O2 = pyrroloquinoline quinone + 2 H2O2 + 2 H2O + H(+). It functions in the pathway cofactor biosynthesis; pyrroloquinoline quinone biosynthesis. Functionally, ring cyclization and eight-electron oxidation of 3a-(2-amino-2-carboxyethyl)-4,5-dioxo-4,5,6,7,8,9-hexahydroquinoline-7,9-dicarboxylic-acid to PQQ. This is Pyrroloquinoline-quinone synthase from Cereibacter sphaeroides (strain KD131 / KCTC 12085) (Rhodobacter sphaeroides).